A 957-amino-acid chain; its full sequence is Glycine dehydrogenase (decarboxylating) 2 (957 aa).

The residue at position 707 (K707) is an N6-(pyridoxal phosphate)lysine.

The protein belongs to the GcvP family. As to quaternary structure, the glycine cleavage system is composed of four proteins: P, T, L and H. It depends on pyridoxal 5'-phosphate as a cofactor.

It carries out the reaction N(6)-[(R)-lipoyl]-L-lysyl-[glycine-cleavage complex H protein] + glycine + H(+) = N(6)-[(R)-S(8)-aminomethyldihydrolipoyl]-L-lysyl-[glycine-cleavage complex H protein] + CO2. In terms of biological role, the glycine cleavage system catalyzes the degradation of glycine. The P protein binds the alpha-amino group of glycine through its pyridoxal phosphate cofactor; CO(2) is released and the remaining methylamine moiety is then transferred to the lipoamide cofactor of the H protein. This chain is Glycine dehydrogenase (decarboxylating) 2 (gcvP2), found in Pseudomonas putida (strain ATCC 47054 / DSM 6125 / CFBP 8728 / NCIMB 11950 / KT2440).